A 223-amino-acid chain; its full sequence is Chalcone--flavanone isomerase (223 aa).

Substrate is bound by residues Thr-50, Asn-114, and Thr-191.

This sequence belongs to the chalcone isomerase family.

The catalysed reaction is a chalcone = a flavanone.. Its pathway is secondary metabolite biosynthesis; flavonoid biosynthesis. Catalyzes the intramolecular cyclization of bicyclic chalcones into tricyclic (S)-flavanones. Responsible for the isomerization of 4,2',4',6'-tetrahydroxychalcone (also termed chalcone) into naringenin. The chain is Chalcone--flavanone isomerase (CHI) from Pisum sativum (Garden pea).